We begin with the raw amino-acid sequence, 50 residues long: Photosystem II reaction center protein M (50 aa).

The helical transmembrane segment at 6-26 (FGFVASLLFVGVPTIFLIGLF) threads the bilayer.

It belongs to the PsbM family. In terms of assembly, PSII is composed of 1 copy each of membrane proteins PsbA, PsbB, PsbC, PsbD, PsbE, PsbF, PsbH, PsbI, PsbJ, PsbK, PsbL, PsbM, PsbT, PsbX, PsbY, Psb30/Ycf12, peripheral proteins PsbO, CyanoQ (PsbQ), PsbU, PsbV and a large number of cofactors. It forms dimeric complexes.

It localises to the cellular thylakoid membrane. One of the components of the core complex of photosystem II (PSII). PSII is a light-driven water:plastoquinone oxidoreductase that uses light energy to abstract electrons from H(2)O, generating O(2) and a proton gradient subsequently used for ATP formation. It consists of a core antenna complex that captures photons, and an electron transfer chain that converts photonic excitation into a charge separation. This subunit is found at the monomer-monomer interface. The chain is Photosystem II reaction center protein M from Prochlorococcus marinus (strain MIT 9215).